The primary structure comprises 369 residues: 4-hydroxy-3-methylbut-2-en-1-yl diphosphate synthase (flavodoxin) (369 aa).

Cysteine 270, cysteine 273, cysteine 305, and glutamate 312 together coordinate [4Fe-4S] cluster.

Belongs to the IspG family. It depends on [4Fe-4S] cluster as a cofactor.

The enzyme catalyses (2E)-4-hydroxy-3-methylbut-2-enyl diphosphate + oxidized [flavodoxin] + H2O + 2 H(+) = 2-C-methyl-D-erythritol 2,4-cyclic diphosphate + reduced [flavodoxin]. It participates in isoprenoid biosynthesis; isopentenyl diphosphate biosynthesis via DXP pathway; isopentenyl diphosphate from 1-deoxy-D-xylulose 5-phosphate: step 5/6. In terms of biological role, converts 2C-methyl-D-erythritol 2,4-cyclodiphosphate (ME-2,4cPP) into 1-hydroxy-2-methyl-2-(E)-butenyl 4-diphosphate. The protein is 4-hydroxy-3-methylbut-2-en-1-yl diphosphate synthase (flavodoxin) of Haemophilus ducreyi (strain 35000HP / ATCC 700724).